We begin with the raw amino-acid sequence, 676 residues long: MSFFDKIFKKFHMGVLYFAVILIGATFIYCYFTKHEKKDNNTFDALAQKNEIEKIQYNPIFANSAFCDIVVTTTDGRVIDFFNIPYDKVFEKKPNGKYKYNTYSVDPRPWNGYEHVFWVFRQCLTMLFFYCFFLFFADTIKQMGQEILASTSGKKGAKSRKVIINHKRFTFSDVAGADEEKEEMSELIDFLKNPRKYAAMGARIPKGVLLYGPPGTGKTLLAKAVAGEAGVPFFAASGSDFDEVYVGVGASRVRDLFKEAQLAAPCIVFIDEIEAVARKRGSNIGGSNGSEQTLNQLLVEMDGFNQKMGVIVIAATNQPEVLDSAILRPGRFDRHFNITLPNVKDREAILKLHASNKKLSEEISLEELAKQTPGFSGAQLEGTLNEAALLAARRNATFINKKDISEALDRILIGPTKKSKKYNDKEKRMVAYHEAGHAVIGIKIPFAQIVQKITIIPRGNAGGYNLMLPQEETFFSSKKALLAQITSFLGGRVAEELMFDDVSNGAYNDFKHATQIAKLMVTKYGMSDLGPVQYSGNTFQNDFSDPKGLEIDQQIQKIIANCYQQAKQIIQENQDLLDTIAKYLLEIETLNKRDIDEIVATGKIAWWEKEKEETNAPTQTTSQMSSNNETTNTDKTPLNDELEITTNLDNQESNESNPNNNEKASPEVLSTDSEQT.

The Cytoplasmic segment spans residues 1-12; it reads MSFFDKIFKKFH. Residues 13 to 33 form a helical membrane-spanning segment; sequence MGVLYFAVILIGATFIYCYFT. The Extracellular portion of the chain corresponds to 34 to 115; sequence KHEKKDNNTF…DPRPWNGYEH (82 aa). Residues 116–136 form a helical membrane-spanning segment; sequence VFWVFRQCLTMLFFYCFFLFF. Over 137–676 the chain is Cytoplasmic; that stretch reads ADTIKQMGQE…EVLSTDSEQT (540 aa). 212-219 lines the ATP pocket; it reads GPPGTGKT. Residue His-433 coordinates Zn(2+). Glu-434 is an active-site residue. Zn(2+)-binding residues include His-437 and Asp-509. The interval 610–676 is disordered; sequence EKEETNAPTQ…EVLSTDSEQT (67 aa). Residues 615–636 show a composition bias toward polar residues; that stretch reads NAPTQTTSQMSSNNETTNTDKT. The span at 650 to 667 shows a compositional bias: low complexity; it reads NQESNESNPNNNEKASPE.

This sequence in the central section; belongs to the AAA ATPase family. The protein in the C-terminal section; belongs to the peptidase M41 family. As to quaternary structure, homohexamer. The cofactor is Zn(2+).

Its subcellular location is the cell membrane. Its function is as follows. Acts as a processive, ATP-dependent zinc metallopeptidase for both cytoplasmic and membrane proteins. Plays a role in the quality control of integral membrane proteins. This is ATP-dependent zinc metalloprotease FtsH from Aster yellows witches'-broom phytoplasma (strain AYWB).